The chain runs to 809 residues: Chloride channel protein F (809 aa).

At 1 to 65 (MSTSKYSKMI…SWAKFARLNN (65 aa)) the chain is on the cytoplasmic side. Transmembrane regions (helical) follow at residues 66-86 (FYIWLFLAAVGLLGSIYLVAV), 110-130 (LQYLSFIAWTVALATGSCFII), 152-172 (FWNPFVVAPMVLLWKTIGLLL), 218-238 (AACCALGVAATFGSPIGGVLF), 246-266 (FYLISNYWRAFFTATVGAVGI), 295-315 (LIAFIILGVLCGLLASLFISL), 333-353 (ITPFGEVIIVAAATAILSFPL), 395-415 (GIILACFLYVVVKLVLTAVSI), 425-445 (IPLFAIGSAVGRFVGELMLVL), 459-479 (VVGAAALCGGATRTVSSAMII), and 486-506 (LTYMVPVLLGVVLSCGIGNLL). A CBS 1 domain is found at 539–597 (MKRDLYYVCQNTTLSQISNLLKRVDEHSIPVVSSDNDLQLIGTISTTTLEEVIAYHERL). Disordered regions lie at residues 604–646 (PLSL…NNQN) and 692–729 (NNNFSDNNNNYNNNNYNNNNNNNNDNNTNNDNNINNNS). A compositionally biased stretch (low complexity) spans 620-646 (NDNINNNQNNNNNNNNNNNNNNSNNQN). The CBS 2 domain occupies 756-809 (IDSSPFQIQETMPVRKIVFMFMMLGGNILYVTNKGKLTGVVAKTELVHQNNNKH).

It belongs to the chloride channel (TC 2.A.49) family.

Its subcellular location is the membrane. Voltage-gated chloride channel. Chloride channels may have several functions including the regulation of cell volume, membrane potential stabilization and signal transduction. The sequence is that of Chloride channel protein F (clcF) from Dictyostelium discoideum (Social amoeba).